We begin with the raw amino-acid sequence, 686 residues long: Amyloid-beta-like protein (686 aa).

The signal sequence occupies residues 1 to 21 (MTVGKLMIGLLIPILVATVYA). Topologically, residues 22-621 (EGSPAGSKRH…VERSASSVFQ (600 aa)) are extracellular. Positions 32–125 (EKFIPMVAFS…PYHCIDGEFH (94 aa)) are GFLD subdomain. The region spanning 32 to 197 (EKFIPMVAFS…TGVEFVCCPN (166 aa)) is the E1 domain. 6 cysteine pairs are disulfide-bonded: C42–C65, C76–C119, C101–C108, C135–C195, C146–C182, and C160–C194. An N-linked (GlcNAc...) asparagine glycan is attached at N84. The segment at 133–197 (HDCQFSHVNS…TGVEFVCCPN (65 aa)) is cuBD subdomain. Residue N201 is glycosylated (N-linked (GlcNAc...) asparagine). The tract at residues 201–245 (NKTDVQKTKEDEDDDDDEDDAYEDDYSEESDEKDEEEPSSQDPYF) is disordered. Positions 211–239 (DEDDDDDEDDAYEDDYSEESDEKDEEEPS) are enriched in acidic residues. An E2 domain is found at 240 to 440 (SQDPYFKIAN…KYVRPIAVTY (201 aa)). An N-linked (GlcNAc...) asparagine glycan is attached at N249. Heparin is bound by residues 252–255 (NEHD) and H382. An N-linked (GlcNAc...) asparagine glycan is attached at N417. 2 disordered regions span residues 479-526 (PTTT…DMKK) and 550-585 (KLVE…NIKE). Residues 500–516 (SDSEEEADEYYEDEDDE) show a composition bias toward acidic residues. Residues 517–526 (QVKKTPDMKK) are compositionally biased toward basic and acidic residues. Over residues 558–567 (TDDEDDDEDS) the composition is skewed to acidic residues. The chain crosses the membrane as a helical span at residues 622 to 642 (PYVLASAMFITAICIIAFAIT). Over 643 to 686 (NARRRRAMRGFIEVDVYTPEERHVAGMQVNGYENPTYSFFDSKA) the chain is Cytoplasmic. Residues 674 to 679 (YENPTY) carry the YENPXY motif motif.

It belongs to the APP family. Interacts (via cytoplasmic domain) with feh-1 (via PID 2 domain). In terms of processing, extracellular region is proteolytically cleaved. In terms of tissue distribution, expressed in the head, pharynx, spermatheca, uterus, vulva, tail and ventral neurons. Specifically expressed in nerve ring interneurons, the ventral cord, socket and amphids in the head, with strong expression in junctional cells, including the pharyngeal intestinal valve and uterine seam junction, and the excretory cell and weak expression in epidermal epithelial cells, including hyp7 cells, vulval cells, rectal valve cells, pharyngeal arcade cells and the tail hypodermis.

It localises to the membrane. The protein resides in the early endosome. In terms of biological role, required for normal developmental progression throughout all life stages. Specifically required for the molt stage during all larval transitions and morphogenesis. Acts with heterochronic genes, including members of the let-7 family, to regulate larval stage to adult transition. Acts synergistically with acn-1 in let-7 regulated postembryonic cell division of hypodermal seam cells. Acts in multiple pathways to influence daf-12 and daf-16 activity to in turn regulate physiological and reproductive processes such as body size and egg-laying. May play a role in neurotransmission. The sequence is that of Amyloid-beta-like protein from Caenorhabditis elegans.